A 386-amino-acid chain; its full sequence is Outer membrane protein assembly factor BamB (386 aa).

The first 20 residues, 1–20 (MKKLFNQVLVAAGVLALLAG), serve as a signal peptide directing secretion. The N-palmitoyl cysteine moiety is linked to residue C21. C21 carries S-diacylglycerol cysteine lipidation.

This sequence belongs to the BamB family. In terms of assembly, part of the Bam complex.

Its subcellular location is the cell outer membrane. Functionally, part of the outer membrane protein assembly complex, which is involved in assembly and insertion of beta-barrel proteins into the outer membrane. This is Outer membrane protein assembly factor BamB from Vibrio cholerae serotype O1 (strain ATCC 39315 / El Tor Inaba N16961).